We begin with the raw amino-acid sequence, 266 residues long: Short-chain dehydrogenase/reductase atnB (266 aa).

Isoleucine 13, aspartate 57, and asparagine 85 together coordinate NADP(+). Residues serine 147 and tyrosine 166 each act as proton donor in the active site. NADP(+) contacts are provided by tyrosine 166, lysine 170, valine 199, and threonine 201. The active-site Lowers pKa of active site Tyr is lysine 170.

It belongs to the short-chain dehydrogenases/reductases (SDR) family.

Its pathway is secondary metabolite biosynthesis; terpenoid biosynthesis. Its function is as follows. Short-chain dehydrogenase/reductase; part of the gene cluster that mediates the biosynthesis of the meroterpenoids arthripenoids. The pathway begins with the HR-PKS atnH that catalyzes two chain-extension steps to form a reduced triketide, which then primes the SAT domain in the NR-PKS atnG to initiate three more cycles of extension to give a linear hexaketide corresponding to the polyketide part of arthripenoids. The FAD-dependent monooxygenase atnJ then performs an oxidative decarboxylation at C11 of the atnH/atnG product, via an electrophilic aromatic hydroxylation with concomitant ipso-decarboxylation. The membrane-bound polyprenyl transferase atnF then introduces a farnesyl group before the FAD-dependent monooxygenase atnK functions as the first epoxidase on terminal C12'-C13' olefin, followed by a second epoxidation on C7'-C8' catalyzed by atnA. The terpene cyclase/mutase atnI then initiates the sequential tricyclic ring formation through protonation of the terminal epoxide and catalyzes the regioselective and stereoselective 6/6/6-tricyclic ring formation. The cytochrome P450 monooxygenase atnM is responsible for hydroxylating both C1' and C10'. The next steps may involve ketoreduction and acetyl transfer by the ketoreductase atnB and the acetyltransferase atnC, and lead to the production of arthripenoid B, the final biosynthetic product of the atn cluster. The hydroquinone moiety in arthripenoid B is prone to undergo spontaneous oxidation to afford a benzoquinone compound, a key intermediate for generating structure diversity. For instance, addition of a cysteine followed by ring contraction gives arthripenoid A, tautomerization gives the main product arthripenoid C, addition of a molecular of water or amine affords arthripenoid D or E, respectively, and loss of one water forms arthripenoid F. The chain is Short-chain dehydrogenase/reductase atnB from Arthrinium sp.